Here is a 951-residue protein sequence, read N- to C-terminus: Glycine dehydrogenase (decarboxylating) 1 (951 aa).

An N6-(pyridoxal phosphate)lysine modification is found at Lys-703.

This sequence belongs to the GcvP family. As to quaternary structure, the glycine cleavage system is composed of four proteins: P, T, L and H. The cofactor is pyridoxal 5'-phosphate.

The enzyme catalyses N(6)-[(R)-lipoyl]-L-lysyl-[glycine-cleavage complex H protein] + glycine + H(+) = N(6)-[(R)-S(8)-aminomethyldihydrolipoyl]-L-lysyl-[glycine-cleavage complex H protein] + CO2. Its function is as follows. The glycine cleavage system catalyzes the degradation of glycine. The P protein binds the alpha-amino group of glycine through its pyridoxal phosphate cofactor; CO(2) is released and the remaining methylamine moiety is then transferred to the lipoamide cofactor of the H protein. The sequence is that of Glycine dehydrogenase (decarboxylating) 1 from Pseudomonas fluorescens (strain ATCC BAA-477 / NRRL B-23932 / Pf-5).